The chain runs to 351 residues: Riboflavin-binding protein RibY (351 aa).

The N-terminal stretch at 1-19 (MMKLRVLTLGILIILLITA) is a signal peptide. C20 carries N-palmitoyl cysteine lipidation. The S-diacylglycerol cysteine moiety is linked to residue C20.

It belongs to the NMT1 family. In terms of assembly, the complex is likely composed of an ATP-binding protein, a transmembrane protein (RibX) and a solute-binding protein (RibY).

The protein localises to the cell membrane. Functionally, part of an ABC transporter complex that transports riboflavin into the cell. Binds riboflavin. In Chloroflexus aurantiacus (strain ATCC 29366 / DSM 635 / J-10-fl), this protein is Riboflavin-binding protein RibY.